Consider the following 247-residue polypeptide: 1-(5-phosphoribosyl)-5-[(5-phosphoribosylamino)methylideneamino] imidazole-4-carboxamide isomerase (247 aa).

Aspartate 8 serves as the catalytic Proton acceptor. Aspartate 131 acts as the Proton donor in catalysis.

This sequence belongs to the HisA/HisF family.

It localises to the cytoplasm. The catalysed reaction is 1-(5-phospho-beta-D-ribosyl)-5-[(5-phospho-beta-D-ribosylamino)methylideneamino]imidazole-4-carboxamide = 5-[(5-phospho-1-deoxy-D-ribulos-1-ylimino)methylamino]-1-(5-phospho-beta-D-ribosyl)imidazole-4-carboxamide. It functions in the pathway amino-acid biosynthesis; L-histidine biosynthesis; L-histidine from 5-phospho-alpha-D-ribose 1-diphosphate: step 4/9. The polypeptide is 1-(5-phosphoribosyl)-5-[(5-phosphoribosylamino)methylideneamino] imidazole-4-carboxamide isomerase (Acidovorax sp. (strain JS42)).